The sequence spans 924 residues: Ubiquitin carboxyl-terminal hydrolase 15 (924 aa).

Positions 130, 133, 141, 144, 150, 154, 163, and 167 each coordinate Zn(2+). Residues 130–167 (CARCFGPAKTRCSRCKSVRYCSGKCQIIHWRVAHKDEC) form an MYND-type zinc finger. Over residues 226-236 (DITPQINTQGR) the composition is skewed to polar residues. Disordered stretches follow at residues 226 to 301 (DITP…VDSS) and 317 to 366 (SHKH…TSKK). Basic and acidic residues predominate over residues 247-256 (ANRESCRRDS). Residues 331 to 362 (GCPNTQYPSNGTRTATLPRTGINKSGEQSCTE) show a composition bias toward polar residues. In terms of domain architecture, USP spans 438-744 (RGLVNCGNSC…GAYMLFYMRS (307 aa)). The Nucleophile role is filled by Cys-447. The active-site Proton acceptor is His-703. Residues 750–793 (RGEHNGKAPVHHSQPRNEMKEQRKPVNRFKPRADHKNTESSSSE) are disordered. Positions 764–773 (PRNEMKEQRK) are enriched in basic and acidic residues.

This sequence belongs to the peptidase C19 family. Interacts with DA1. As to expression, highly expressed in rosette leaves and inflorescence. Expressed at low levels in cotyledons, stems, cauline leaves and siliques.

The protein resides in the cytoplasm. It is found in the nucleus. It carries out the reaction Thiol-dependent hydrolysis of ester, thioester, amide, peptide and isopeptide bonds formed by the C-terminal Gly of ubiquitin (a 76-residue protein attached to proteins as an intracellular targeting signal).. Functionally, recognizes and hydrolyzes the peptide bond at the C-terminal Gly of ubiquitin. Involved in the processing of poly-ubiquitin precursors as well as that of ubiquitinated proteins. Involved in the regulation of organ size. Acts as a positive regulator of cell proliferation. Possesses deubiquitinating enzyme activity in vitro. The enzyme activity of UBP15 is required for its function in regulation of cell proliferation. Functions antagonistically in a common pathway with DA1 to regulate seed size. Acts maternally to regulate seed size by promoting cell proliferation in the integuments of ovules and developing seeds. Functions independently of DA2 and BB. The sequence is that of Ubiquitin carboxyl-terminal hydrolase 15 from Arabidopsis thaliana (Mouse-ear cress).